Reading from the N-terminus, the 436-residue chain is GTPase Der (436 aa).

2 EngA-type G domains span residues 4 to 167 and 176 to 351; these read PVVA…PKEE and VKFS…DNHS. GTP-binding positions include 10–17, 57–61, 119–122, 182–189, 229–233, and 294–297; these read GRPNVGKS, DTGGI, NKVD, DTAGM, and NKWD. The KH-like domain occupies 352–436; that stretch reads LRVQSSMLND…PIRVIARKRK (85 aa).

Belongs to the TRAFAC class TrmE-Era-EngA-EngB-Septin-like GTPase superfamily. EngA (Der) GTPase family. In terms of assembly, associates with the 50S ribosomal subunit.

GTPase that plays an essential role in the late steps of ribosome biogenesis. The chain is GTPase Der from Listeria innocua serovar 6a (strain ATCC BAA-680 / CLIP 11262).